The sequence spans 362 residues: MSWGKLSPKANNVMIICHALSGSADVSDWWGPLLGPGKAFDTDKFFVVCMNSLGSPYGTASPVTAKNGDYSQGWYGADFPSTTIRDDVRLHKLVLDKLGVRKVAAVIGGSMGGMHVLEWAFFGKDYVRCIVPAATSSHQSAWAIGWGEAQRHAIRSDVKYKNGRYGFDDPPILGLEAARMTALLTYRSRDSLERRFGRDTGNKKKTQQQDSKTIPNNGTPIHSQGGADETPVAFDRADSNFAAQSYLRYQAKKFSDRFDSNCYIALTNKLDTHDLARGRTRTIAEALSLIQQPTLVLGIRSDGLYTLAEQEQIARAVPNAKLREIVSDDGHDAFLIEWSQLNWLLIGFLHENLPDIMQRAAL.

The AB hydrolase-1 domain maps to 12–335; it reads NVMIICHALS…VSDDGHDAFL (324 aa). The Nucleophile role is filled by Ser110. The segment at 195–232 is disordered; the sequence is RFGRDTGNKKKTQQQDSKTIPNNGTPIHSQGGADETPV. Residues 208-222 are compositionally biased toward polar residues; that stretch reads QQDSKTIPNNGTPIH. Residues Asp302 and His331 contribute to the active site.

This sequence belongs to the AB hydrolase superfamily. MetX family.

The enzyme catalyses L-homoserine + acetyl-CoA = O-acetyl-L-homoserine + CoA. The protein operates within mycotoxin biosynthesis. In terms of biological role, homoserine O-acetyltransferase; part of the gene cluster that mediates the biosynthesis of fusaric acid, a mycotoxin with low to moderate toxicity to animals and humans, but with high phytotoxic properties. L-aspartate is suggested as fusaric acid amino acid precursor that is activated and further processed to O-acetyl-L-homoserine by cluster enzymes aspartate kinase FUB3 and homoserine O-acetyltransferase FUB5, as well as enzymes of the primary metabolism. The polyketide synthase (PKS) FUB1 generates the triketide trans-2-hexenal which is presumptively released by the hydrolase FUB4 and linked to the NRPS-bound amino acid precursor by NAD(P)-dependent dehydrogenase FUB6. FUB1, FUB4, and the non-canonical NRPS Fub8 may form an enzyme complex. Further processing of the NRPS-bound intermediate might be carried out by FUB6 and the O-acetylhomoserine FUB7, enabling a spontaneous electrocyclization to close the carbon backbone of fusaric acid. Dihydrofusaric acid is likely to be released via reduction by the thioester reductase (TR) domain of FUB8 whereupon the final oxidation to fusaric acid may (also) be performed by the FMN-dependent dehydrogenase FUB9. The polypeptide is Homoserine O-acetyltransferase FUB5 (Fusarium oxysporum f. sp. lycopersici (strain 4287 / CBS 123668 / FGSC 9935 / NRRL 34936) (Fusarium vascular wilt of tomato)).